The sequence spans 256 residues: Dihydromonacolin L-[lovastatin nonaketide synthase] thioesterase (256 aa).

Catalysis depends on charge relay system residues Ser122, Asp201, and His229.

This sequence belongs to the LovG family.

The catalysed reaction is dihydromonacolin L-[lovastatin nonaketide synthase] + H2O = holo-[lovastatin nonaketide synthase] + dihydromonacolin L carboxylate + H(+). It functions in the pathway polyketide biosynthesis; lovastatin biosynthesis. Esterase; part of the gene cluster that mediates the biosynthesis of lovastatin (also known as mevinolin, mevacor or monacolin K), a hypolipidemic inhibitor of (3S)-hydroxymethylglutaryl-coenzyme A (HMG-CoA) reductase (HMGR). The first step in the biosynthesis of lovastatin is the production of dihydromonacolin L acid by the lovastatin nonaketide synthase lovB and the trans-acting enoyl reductase lovC via condensation of one acetyl-CoA unit and 8 malonyl-CoA units. Dihydromonacolin L acid is released from lovB by the thioesterase lovG. Next, dihydromonacolin L acid is oxidized by the dihydromonacolin L monooxygenase lovA twice to form monacolin J acid. The 2-methylbutyrate moiety of lovastatin is synthesized by the lovastatin diketide synthase lovF via condensation of one acetyl-CoA unit and one malonyl-CoA unit. Finally, the covalent attachment of this moiety to monacolin J acid is catalyzed by the transesterase lovD to yield lovastatin. LovD has broad substrate specificity and can also convert monacolin J to simvastatin using alpha-dimethylbutanoyl-S-methyl-3-mercaptopropionate (DMB-S-MMP) as the thioester acyl donor, and can also catalyze the reverse reaction and function as hydrolase in vitro. LovD has much higher activity with LovF-bound 2-methylbutanoate than with free diketide substrates. In terms of biological role, esterase that catalyzes the release of covalently bound dihydromonacolin L from LovB during lovastatin biosynthesis. This is Dihydromonacolin L-[lovastatin nonaketide synthase] thioesterase from Aspergillus terreus (strain NIH 2624 / FGSC A1156).